A 129-amino-acid chain; its full sequence is MDKKAIFDSVSNMEEQIGELYQQLGDLKTNLGEMLEENNRLNLENEHLRRRLSLTDEVAPEPVAEEEAVHGVMAPNRKEAMQQMIELGEGYDNLVQLYKEGFHVCNVHFGSPRGNDEDCLFCLSLLNKK.

Residues histidine 103, cysteine 105, cysteine 119, and cysteine 122 each coordinate Zn(2+).

The protein belongs to the YabA family. As to quaternary structure, homotetramer. Interacts with both DnaA and DnaN, acting as a bridge between these two proteins. The cofactor is Zn(2+).

It is found in the cytoplasm. It localises to the nucleoid. Involved in control of chromosome replication initiation. Inhibits the cooperative binding of DnaA to the oriC region, thus negatively regulating initiation of chromosome replication. Inhibits the ability of DnaA-ATP to form a helix on DNA; does not disassemble preformed DnaA-DNA helices. Decreases the residence time of DnaA on the chromosome at its binding sites (oriC, replication forks and promoter-binding sites). Tethers DnaA to the replication machinery via the DNA polymerase beta sliding clamp subunit (dnaN). Associates with oriC and other DnaA targets on the chromosome in a DnaA-dependent manner. This chain is Replication initiation control protein YabA, found in Listeria innocua serovar 6a (strain ATCC BAA-680 / CLIP 11262).